Here is a 1773-residue protein sequence, read N- to C-terminus: ATP-binding cassette sub-family A member 17 (1773 aa).

The next 3 membrane-spanning stretches (helical) occupy residues 22–42 (TLVT…VLYL), 262–282 (FPLL…NSIL), and 306–326 (AWFI…TVLF). An N-linked (GlcNAc...) asparagine glycan is attached at Asn340. 4 helical membrane passes run 342–362 (TLIF…AFMM), 372–392 (GTVI…YITF), 403–423 (ILSC…ISLF), and 444–464 (FTQV…VAFL). An ABC transporter 1 domain is found at 525–758 (IEIQHLYKVF…YGAGYYMTII (234 aa)). 561–568 (GHNGAGKT) provides a ligand contact to ATP. An N-linked (GlcNAc...) asparagine glycan is attached at Asn615. Transmembrane regions (helical) follow at residues 912 to 932 (LVLS…LSFF), 1088 to 1108 (LVVN…ILTV), 1134 to 1154 (LLWD…VFFW), 1166 to 1186 (IPAV…LVYT), 1198 to 1218 (CVKL…LVTV), 1236 to 1256 (IFLI…YYNF), and 1293 to 1313 (IGKY…LLFL). N-linked (GlcNAc...) asparagine glycosylation occurs at Asn1340. The 234-residue stretch at 1369 to 1602 (LVVKELSKVY…FGSGYSLQAK (234 aa)) folds into the ABC transporter 2 domain. ATP is bound at residue 1404 to 1411 (GLNGAGKT). Residues 1690 to 1773 (NIQQGQAALD…SQPPSEPVLL (84 aa)) are disordered. Residues 1700–1710 (SSLSPSNSRPI) are compositionally biased toward low complexity. Pro residues-rich tracts occupy residues 1711–1740 (SSPP…PSRP) and 1763–1773 (PSQPPSEPVLL).

It belongs to the ABC transporter superfamily. ABCA family. Post-translationally, N-glycosylated.

It localises to the endoplasmic reticulum membrane. It is found in the cytoplasm. The enzyme catalyses cholesterol(in) + ATP + H2O = cholesterol(out) + ADP + phosphate + H(+). Its function is as follows. Promotes cholesterol efflux from sperm which renders sperm capable of fertilization. Has also been shown to decrease levels of intracellular esterified neutral lipids including cholesteryl esters, fatty acid esters and triacylglycerols. The chain is ATP-binding cassette sub-family A member 17 from Rattus norvegicus (Rat).